The primary structure comprises 320 residues: Ferrochelatase (320 aa).

Fe cation-binding residues include His-194 and Glu-275.

It belongs to the ferrochelatase family. In terms of assembly, monomer.

It localises to the cytoplasm. It catalyses the reaction heme b + 2 H(+) = protoporphyrin IX + Fe(2+). It functions in the pathway porphyrin-containing compound metabolism; protoheme biosynthesis; protoheme from protoporphyrin-IX: step 1/1. Functionally, catalyzes the ferrous insertion into protoporphyrin IX. The protein is Ferrochelatase of Escherichia coli O8 (strain IAI1).